The sequence spans 311 residues: tRNA pseudouridine synthase B (311 aa).

Catalysis depends on Asp49, which acts as the Nucleophile.

It belongs to the pseudouridine synthase TruB family. Type 1 subfamily.

It carries out the reaction uridine(55) in tRNA = pseudouridine(55) in tRNA. Functionally, responsible for synthesis of pseudouridine from uracil-55 in the psi GC loop of transfer RNAs. This chain is tRNA pseudouridine synthase B, found in Rhizobium meliloti (strain 1021) (Ensifer meliloti).